Reading from the N-terminus, the 177-residue chain is Non-specific lipid transfer protein GPI-anchored 22 (177 aa).

The N-terminal stretch at 1–29 (MARFMAYNQNPQMLALCITVAVMFLGVRS) is a signal peptide. Disulfide bonds link C38-C81, C48-C63, C64-C108, and C79-C117. Residue N113 is glycosylated (N-linked (GlcNAc...) asparagine). S152 is lipidated: GPI-anchor amidated serine. Positions 153 to 177 (SSIKGRDNKQFGLMMAGALSIWYIM) are cleaved as a propeptide — removed in mature form.

This sequence belongs to the plant LTP family. As to expression, expressed in seedlings, preferentially in hypocotyls and roots. Also observed in siliques.

The protein localises to the cell membrane. Probable lipid transfer protein. This Arabidopsis thaliana (Mouse-ear cress) protein is Non-specific lipid transfer protein GPI-anchored 22.